Here is a 288-residue protein sequence, read N- to C-terminus: Chitinase 5 (288 aa).

An N-terminal signal peptide occupies residues 1-29; sequence MANSPTPTMLAFLALGLALLLSATGQASA. Residues 30–64 form the Chitin-binding type-1 domain; the sequence is QNCGCQSNMCCSKWGYCGTGKDYCGDGCRSGPCYG. Intrachain disulfides connect C32–C40, C34–C46, C39–C53, C57–C62, C107–C156, C169–C178, and C256–C288. The active-site Proton donor is the E151.

The protein belongs to the glycosyl hydrolase 19 family. Chitinase class IV subfamily. In terms of tissue distribution, expressed in sheaths and meristems and at lower levels in roots and leaves.

The catalysed reaction is Random endo-hydrolysis of N-acetyl-beta-D-glucosaminide (1-&gt;4)-beta-linkages in chitin and chitodextrins.. In terms of biological role, may function in reproductive organs during embryogenesis and seed maturation. This is Chitinase 5 (Cht5) from Oryza sativa subsp. japonica (Rice).